The chain runs to 44 residues: Large ribosomal subunit protein bL34 (44 aa).

Basic residues-rich tracts occupy residues 1 to 14 and 31 to 44; these read MKRT…KRQK and LSAR…RLAV. Residues 1 to 44 are disordered; sequence MKRTLGGTTRKRQKTSGFRARMRTASGRRVLSARRRRGRHRLAV.

The protein belongs to the bacterial ribosomal protein bL34 family.

The sequence is that of Large ribosomal subunit protein bL34 from Gloeobacter violaceus (strain ATCC 29082 / PCC 7421).